The chain runs to 75 residues: Small capsomere-interacting protein (75 aa).

The protein belongs to the herpesviridae small capsomere-interacting protein family. In terms of assembly, interacts with the major capsid protein/MCP.

The protein resides in the virion. It localises to the host nucleus. Its function is as follows. Participates in the assembly of the infectious particles by decorating the outer surface of the capsid shell and thus forming a layer between the capsid and the tegument. Complexes composed of the major capsid protein and small capsomere-interacting protein/SCP assemble together in the host cytoplasm and are translocated to the nucleus, where they accumulate and participate in capsid assembly. This is Small capsomere-interacting protein from Homo sapiens (Human).